The primary structure comprises 412 residues: Tyrosine--tRNA ligase (412 aa).

Tyr38 serves as a coordination point for L-tyrosine. The 'HIGH' region signature appears at 43-52 (CTANSLHIGS). L-tyrosine contacts are provided by Tyr170 and Gln174. The 'KMSKS' region motif lies at 230–234 (KMGKT). Lys233 is an ATP binding site. The 67-residue stretch at 343–409 (IPISKLLHMW…CGKKRRLKVV (67 aa)) folds into the S4 RNA-binding domain.

This sequence belongs to the class-I aminoacyl-tRNA synthetase family. TyrS type 1 subfamily. In terms of assembly, homodimer.

It is found in the cytoplasm. The catalysed reaction is tRNA(Tyr) + L-tyrosine + ATP = L-tyrosyl-tRNA(Tyr) + AMP + diphosphate + H(+). Catalyzes the attachment of tyrosine to tRNA(Tyr) in a two-step reaction: tyrosine is first activated by ATP to form Tyr-AMP and then transferred to the acceptor end of tRNA(Tyr). The sequence is that of Tyrosine--tRNA ligase from Anaplasma phagocytophilum (strain HZ).